A 195-amino-acid chain; its full sequence is Protein GrpE (195 aa).

A compositionally biased stretch (basic and acidic residues) spans 1-14 (MQEPHDQEPIEKQK). The disordered stretch occupies residues 1–45 (MQEPHDQEPIEKQKLPGMDDVLETEHSGTVAGNTERAGEDAAPSL).

Belongs to the GrpE family. Homodimer.

It localises to the cytoplasm. In terms of biological role, participates actively in the response to hyperosmotic and heat shock by preventing the aggregation of stress-denatured proteins, in association with DnaK and GrpE. It is the nucleotide exchange factor for DnaK and may function as a thermosensor. Unfolded proteins bind initially to DnaJ; upon interaction with the DnaJ-bound protein, DnaK hydrolyzes its bound ATP, resulting in the formation of a stable complex. GrpE releases ADP from DnaK; ATP binding to DnaK triggers the release of the substrate protein, thus completing the reaction cycle. Several rounds of ATP-dependent interactions between DnaJ, DnaK and GrpE are required for fully efficient folding. The sequence is that of Protein GrpE from Nitrosomonas europaea (strain ATCC 19718 / CIP 103999 / KCTC 2705 / NBRC 14298).